Here is a 470-residue protein sequence, read N- to C-terminus: MTKVYITDTLSKSKVPLETLEPGVVKMYVCGPTVYNYIHIGNARPMVVFDALRRFLEFVGYRVIMVQNFTDIDDKIINEAKEWNVDWKTVADTFIAEYFHDAQLLGVRAANYHPRTTDFVKDIVEAIETMIKKDFAYPAENGDVYFSVRKLRDYGKLSGKNLDDLRAGARVDVNELKKDPLDFVLWKSAKPGEPTWDSPWCNGRPGWHIECSVMSQKLLGDMFDIHGGGEDLIFPHHEDEIAQSEALTGKPPAKYWMHNGMIIVRGDKMSKSLGNTFMVREAVRRYTKDGVKLFLLSKHYRSPMEFSDEILQDNMRAAQRVHNALNRFTEKYPYPLVPKIDEEMENFIDRFVEALSDDFNTPVALSILFDTVKELNKSMDEGNDERALKMYHLVKRIYGPVLGVFDSEIQKQQQVNSEQLDQLIQGIINLRNEYRKNKQFEIADKLRDALLNAKIKLLDTPEGTKYEIND.

C30 provides a ligand contact to Zn(2+). Residues 32-42 carry the 'HIGH' region motif; it reads PTVYNYIHIGN. Zn(2+) contacts are provided by C211, H236, and E240. The 'KMSKS' region signature appears at 268 to 272; sequence KMSKS. K271 is a binding site for ATP.

This sequence belongs to the class-I aminoacyl-tRNA synthetase family. In terms of assembly, monomer. Zn(2+) serves as cofactor.

The protein resides in the cytoplasm. The catalysed reaction is tRNA(Cys) + L-cysteine + ATP = L-cysteinyl-tRNA(Cys) + AMP + diphosphate. This Fervidobacterium nodosum (strain ATCC 35602 / DSM 5306 / Rt17-B1) protein is Cysteine--tRNA ligase.